Here is a 90-residue protein sequence, read N- to C-terminus: MEIRRQGLIVWLHSLKQAKMLRKFGNVHYVSKRLKYVVVYCNMEDAERIIAKIRSYSFVKQVDLSYKPFLKMEFESKQDKAKEYDYKAGL.

This sequence belongs to the UPF0298 family.

It is found in the cytoplasm. The polypeptide is UPF0298 protein BLi01717/BL02989 (Bacillus licheniformis (strain ATCC 14580 / DSM 13 / JCM 2505 / CCUG 7422 / NBRC 12200 / NCIMB 9375 / NCTC 10341 / NRRL NRS-1264 / Gibson 46)).